The primary structure comprises 207 residues: A-type ATP synthase subunit E (207 aa).

This sequence belongs to the V-ATPase E subunit family. As to quaternary structure, has multiple subunits with at least A(3), B(3), C, D, E, F, H, I and proteolipid K(x).

Its subcellular location is the cell membrane. Functionally, component of the A-type ATP synthase that produces ATP from ADP in the presence of a proton gradient across the membrane. This is A-type ATP synthase subunit E from Hyperthermus butylicus (strain DSM 5456 / JCM 9403 / PLM1-5).